We begin with the raw amino-acid sequence, 83 residues long: RNA-binding protein Hfq (83 aa).

Positions 9–68 (DPYLNALRKERIPVSIFLVNGIKLQGQIESFDQFVILLKNTVSQMVYKHAISTVVPARNV) constitute a Sm domain.

It belongs to the Hfq family. In terms of assembly, homohexamer.

In terms of biological role, RNA chaperone that binds small regulatory RNA (sRNAs) and mRNAs to facilitate mRNA translational regulation in response to envelope stress, environmental stress and changes in metabolite concentrations. Also binds with high specificity to tRNAs. This Hahella chejuensis (strain KCTC 2396) protein is RNA-binding protein Hfq.